Here is a 63-residue protein sequence, read N- to C-terminus: Cysteine-rich peptide clone 2 (63 aa).

The signal sequence occupies residues 1–23 (MHFSGVVLILLSMTLVNFVFVET). Cystine bridges form between C33-C53, C38-C58, and C42-C60.

In terms of tissue distribution, expressed by the venom gland.

Its subcellular location is the secreted. The sequence is that of Cysteine-rich peptide clone 2 from Tityus costatus (Brazilian scorpion).